The sequence spans 161 residues: Regulatory protein RecX (161 aa).

It belongs to the RecX family.

It is found in the cytoplasm. Functionally, modulates RecA activity. The polypeptide is Regulatory protein RecX (Thermotoga petrophila (strain ATCC BAA-488 / DSM 13995 / JCM 10881 / RKU-1)).